The following is a 385-amino-acid chain: Acetylornithine deacetylase (385 aa).

His-80 contacts Zn(2+). Residue Asp-82 is part of the active site. Asp-112 lines the Zn(2+) pocket. The active-site Proton acceptor is the Glu-144. Residues Glu-145, Glu-169, and His-355 each coordinate Zn(2+).

This sequence belongs to the peptidase M20A family. ArgE subfamily. As to quaternary structure, homodimer. Zn(2+) is required as a cofactor. Requires Co(2+) as cofactor. The cofactor is glutathione.

It localises to the cytoplasm. The enzyme catalyses N(2)-acetyl-L-ornithine + H2O = L-ornithine + acetate. It participates in amino-acid biosynthesis; L-arginine biosynthesis; L-ornithine from N(2)-acetyl-L-ornithine (linear): step 1/1. In terms of biological role, catalyzes the hydrolysis of the amide bond of N(2)-acetylated L-amino acids. Cleaves the acetyl group from N-acetyl-L-ornithine to form L-ornithine, an intermediate in L-arginine biosynthesis pathway, and a branchpoint in the synthesis of polyamines. The chain is Acetylornithine deacetylase from Photorhabdus laumondii subsp. laumondii (strain DSM 15139 / CIP 105565 / TT01) (Photorhabdus luminescens subsp. laumondii).